The chain runs to 314 residues: Mitochondrial 2-oxoglutarate/malate carrier protein (314 aa).

Ala-2 is modified (N-acetylalanine). Ser-6 is subject to Phosphoserine. 3 Solcar repeats span residues 23 to 108 (VKFL…LFER), 117 to 208 (PGFL…SKQF), and 217 to 306 (DNIL…MNKA). A helical transmembrane segment spans residues 24 to 42 (KFLFGGLAGMGATVFVQPL). Lys-57 is modified (N6-succinyllysine). A helical membrane pass occupies residues 83-101 (GLSAGLLRQATYTTTRLGI). The residue at position 102 (Tyr-102) is a Phosphotyrosine. The next 3 helical transmembrane spans lie at 119 to 140 (FLLKAVIGMTAGATGAFVGTPA), 183 to 202 (GCIPTMARAVVVNAAQLASY), and 222 to 240 (HFCASMISGLVTTAASMPV). N6-acetyllysine is present on Lys-256. The chain crosses the membrane as a helical span at residues 281–300 (GFTPYYARLGPHTVLTFIFL).

This sequence belongs to the mitochondrial carrier (TC 2.A.29) family. Interacts with SMIM26. The N-terminus is blocked. As to expression, heart, liver and brain.

It is found in the mitochondrion inner membrane. It carries out the reaction (S)-malate(in) + 2-oxoglutarate(out) = (S)-malate(out) + 2-oxoglutarate(in). It catalyses the reaction malonate(in) + 2-oxoglutarate(out) = malonate(out) + 2-oxoglutarate(in). The enzyme catalyses succinate(in) + 2-oxoglutarate(out) = succinate(out) + 2-oxoglutarate(in). The catalysed reaction is maleate(in) + 2-oxoglutarate(out) = maleate(out) + 2-oxoglutarate(in). It carries out the reaction oxaloacetate(in) + 2-oxoglutarate(out) = oxaloacetate(out) + 2-oxoglutarate(in). In terms of biological role, catalyzes the transport of 2-oxoglutarate (alpha-oxoglutarate) across the inner mitochondrial membrane in an electroneutral exchange for malate. Can also exchange 2-oxoglutarate for other dicarboxylic acids such as malonate, succinate, maleate and oxaloacetate, although with lower affinity. Contributes to several metabolic processes, including the malate-aspartate shuttle, the oxoglutarate/isocitrate shuttle, in gluconeogenesis from lactate, and in nitrogen metabolism. Maintains mitochondrial fusion and fission events, and the organization and morphology of cristae. Involved in the regulation of apoptosis. Helps protect from cytotoxic-induced apoptosis by modulating glutathione levels in mitochondria. In Bos taurus (Bovine), this protein is Mitochondrial 2-oxoglutarate/malate carrier protein (SLC25A11).